A 158-amino-acid chain; its full sequence is 3-hydroxyacyl-[acyl-carrier-protein] dehydratase FabZ (158 aa).

H57 is an active-site residue.

This sequence belongs to the thioester dehydratase family. FabZ subfamily.

It localises to the cytoplasm. It catalyses the reaction a (3R)-hydroxyacyl-[ACP] = a (2E)-enoyl-[ACP] + H2O. In terms of biological role, involved in unsaturated fatty acids biosynthesis. Catalyzes the dehydration of short chain beta-hydroxyacyl-ACPs and long chain saturated and unsaturated beta-hydroxyacyl-ACPs. This chain is 3-hydroxyacyl-[acyl-carrier-protein] dehydratase FabZ, found in Helicobacter acinonychis (strain Sheeba).